The sequence spans 1052 residues: Swarming motility protein SwrC (1052 aa).

It belongs to the resistance-nodulation-cell division (RND) (TC 2.A.6) family.

Its function is as follows. Required for self-resistance to surfactin, an antimicrobial lipopeptide surfactant produced by B.subtilis. Also required for swarming motility. The chain is Swarming motility protein SwrC (swrC) from Bacillus subtilis (strain 168).